The following is a 561-amino-acid chain: Trehalose-6-phosphate hydrolase (561 aa).

The Nucleophile role is filled by Asp-203. Residue Glu-254 is the Proton donor of the active site.

The protein belongs to the glycosyl hydrolase 13 family.

The protein resides in the cytoplasm. It carries out the reaction alpha,alpha-trehalose 6-phosphate + H2O = D-glucose 6-phosphate + D-glucose. With respect to regulation, activity is stimulated by high salt concentrations with different efficiencies depending on the kind of salt. In vitro, inhibited by glucose. Hydrolyzes trehalose-6-phosphate to glucose and glucose 6-phosphate. Can also very effectively hydrolyze p-nitrophenyl-alpha-D-glucopyranoside, but not lactose, maltose, sucrose or sucrose-6-phosphate. Trehalose is also hydrolyzed, but to a much smaller extent than trehalose-6-phosphate. The sequence is that of Trehalose-6-phosphate hydrolase from Bacillus subtilis (strain 168).